The sequence spans 416 residues: Squalene synthase (416 aa).

NADP(+) contacts are provided by R52 and R77. Mg(2+)-binding residues include D80, E83, and D84. R218 serves as a coordination point for NADP(+). The helical transmembrane segment at 284–304 (SVFNFCAIPQVMAIATLAACY) threads the bilayer. NADP(+) is bound by residues K315 and R317. A helical transmembrane segment spans residues 384–404 (PIYLSFIMLLAALSWQYLSTL).

It belongs to the phytoene/squalene synthase family. Requires Mg(2+) as cofactor.

The protein localises to the endoplasmic reticulum membrane. The enzyme catalyses 2 (2E,6E)-farnesyl diphosphate + NADPH + H(+) = squalene + 2 diphosphate + NADP(+). The catalysed reaction is 2 (2E,6E)-farnesyl diphosphate + NADH + H(+) = squalene + 2 diphosphate + NAD(+). It catalyses the reaction presqualene diphosphate + NADH + H(+) = squalene + diphosphate + NAD(+). It carries out the reaction presqualene diphosphate + NADPH + H(+) = squalene + diphosphate + NADP(+). The enzyme catalyses 2 (2E,6E)-farnesyl diphosphate = presqualene diphosphate + diphosphate. It participates in terpene metabolism; lanosterol biosynthesis; lanosterol from farnesyl diphosphate: step 1/3. In terms of biological role, catalyzes the condensation of 2 farnesyl pyrophosphate (FPP) moieties to form squalene. Proceeds in two distinct steps. In the first half-reaction, two molecules of FPP react to form the stable presqualene diphosphate intermediate (PSQPP), with concomitant release of a proton and a molecule of inorganic diphosphate. In the second half-reaction, PSQPP undergoes heterolysis, isomerization, and reduction with NADPH or NADH to form squalene. It is the first committed enzyme of the sterol biosynthesis pathway. The polypeptide is Squalene synthase (Fdft1) (Rattus norvegicus (Rat)).